The chain runs to 705 residues: Elongation factor G (705 aa).

The 283-residue stretch at 8-290 (ERYRNFGIMA…GVVHLLPSPA (283 aa)) folds into the tr-type G domain. GTP contacts are provided by residues 17–24 (AHIDAGKT), 88–92 (DTPGH), and 142–145 (NKMD). A disordered region spans residues 290 to 309 (ADRPPVQGIDEDEKEDTRAA).

It belongs to the TRAFAC class translation factor GTPase superfamily. Classic translation factor GTPase family. EF-G/EF-2 subfamily.

It is found in the cytoplasm. Its function is as follows. Catalyzes the GTP-dependent ribosomal translocation step during translation elongation. During this step, the ribosome changes from the pre-translocational (PRE) to the post-translocational (POST) state as the newly formed A-site-bound peptidyl-tRNA and P-site-bound deacylated tRNA move to the P and E sites, respectively. Catalyzes the coordinated movement of the two tRNA molecules, the mRNA and conformational changes in the ribosome. The chain is Elongation factor G from Xanthomonas euvesicatoria pv. vesicatoria (strain 85-10) (Xanthomonas campestris pv. vesicatoria).